The primary structure comprises 1357 residues: DNA-directed RNA polymerase subunit beta (1357 aa).

Belongs to the RNA polymerase beta chain family. The RNAP catalytic core consists of 2 alpha, 1 beta, 1 beta' and 1 omega subunit. When a sigma factor is associated with the core the holoenzyme is formed, which can initiate transcription.

It carries out the reaction RNA(n) + a ribonucleoside 5'-triphosphate = RNA(n+1) + diphosphate. Functionally, DNA-dependent RNA polymerase catalyzes the transcription of DNA into RNA using the four ribonucleoside triphosphates as substrates. The polypeptide is DNA-directed RNA polymerase subunit beta (Acinetobacter baumannii (strain ATCC 17978 / DSM 105126 / CIP 53.77 / LMG 1025 / NCDC KC755 / 5377)).